The primary structure comprises 103 residues: MANKQAEKLITAIKKDYLKEIIKKIEELDIDKKDYIVEKLKEEKPKKKRNAPKIPLNKQCTKETASKGKCTVAACYNHICWAHMNKTQRNEYRLLKSVDIKTI.

Functionally, DNA-binding protein that recognizes the inverted terminal repeats of the pGKl linear DNA plasmids. The chain is DNA-binding protein TRF1 (TRF1) from Kluyveromyces lactis (strain ATCC 8585 / CBS 2359 / DSM 70799 / NBRC 1267 / NRRL Y-1140 / WM37) (Yeast).